The primary structure comprises 247 residues: MNPLLILTFVAAALAAPFDDDDKIVGGYNCEENSVPYQVSLNSGYHFCGGSLINEQWVVSAGHCYKSRIQVRLGEHNIEVLEGNEQFINAAKIIRHPQYDRKTLNNDIMLIKLSSRAVINARVSTISLPTAPPATGTKCLISGWGNTASSGADYPDELQCLDAPVLSQAKCEASYPGKITSNMFCVGFLEGGKDSCQGDSGGPVVCNGQLQGVVSWGDGCAQKNKPGVYTKVYNYVKWIKNTIAANS.

The signal sequence occupies residues 1 to 15; sequence MNPLLILTFVAAALA. Positions 16-23 are cleaved as a propeptide — activation peptide; that stretch reads APFDDDDK. Positions 24–244 constitute a Peptidase S1 domain; the sequence is IVGGYNCEEN…YVKWIKNTIA (221 aa). Intrachain disulfides connect Cys-30–Cys-160, Cys-48–Cys-64, Cys-139–Cys-206, Cys-171–Cys-185, and Cys-196–Cys-220. The active-site Charge relay system is His-63. Residues Glu-75, Asn-77, Val-80, and Glu-85 each coordinate Ca(2+). Asp-107 functions as the Charge relay system in the catalytic mechanism. Sulfotyrosine is present on Tyr-154. Ser-200 (charge relay system) is an active-site residue.

The protein belongs to the peptidase S1 family. Interacts with SERPINA1. The cofactor is Ca(2+). Occurs in a single-chain form and a two-chain form, produced by proteolytic cleavage after Arg-122. In terms of processing, sulfation at Tyr-154 increases selectivity towards basic versus apolar residues at the P2' position of inhibitors that bind in a substrate-like fashion. Although the increase in selectivity is relatively small, it may facilitate digestion of a broader range of dietary proteins.

The protein resides in the secreted. Its subcellular location is the extracellular space. It carries out the reaction Preferential cleavage: Arg-|-Xaa, Lys-|-Xaa.. In terms of biological role, has activity against the synthetic substrates Boc-Phe-Ser-Arg-Mec, Boc-Leu-Thr-Arg-Mec, Boc-Gln-Ala-Arg-Mec and Boc-Val-Pro-Arg-Mec. The single-chain form is more active than the two-chain form against all of these substrates. The chain is Serine protease 1 from Homo sapiens (Human).